Here is a 600-residue protein sequence, read N- to C-terminus: Phosphoenolpyruvate carboxykinase (ATP) (600 aa).

Gly302–Thr309 contributes to the ATP binding site.

Belongs to the phosphoenolpyruvate carboxykinase (ATP) family.

It carries out the reaction oxaloacetate + ATP = phosphoenolpyruvate + ADP + CO2. It functions in the pathway carbohydrate biosynthesis; gluconeogenesis. In Emericella nidulans (strain FGSC A4 / ATCC 38163 / CBS 112.46 / NRRL 194 / M139) (Aspergillus nidulans), this protein is Phosphoenolpyruvate carboxykinase (ATP) (acuF).